We begin with the raw amino-acid sequence, 191 residues long: Ribosome maturation factor RimM (191 aa).

Residues Glu107–Leu184 form the PRC barrel domain.

Belongs to the RimM family. Binds ribosomal protein uS19.

The protein localises to the cytoplasm. An accessory protein needed during the final step in the assembly of 30S ribosomal subunit, possibly for assembly of the head region. Essential for efficient processing of 16S rRNA. May be needed both before and after RbfA during the maturation of 16S rRNA. It has affinity for free ribosomal 30S subunits but not for 70S ribosomes. The protein is Ribosome maturation factor RimM of Kocuria rhizophila (strain ATCC 9341 / DSM 348 / NBRC 103217 / DC2201).